A 101-amino-acid polypeptide reads, in one-letter code: UPF0235 protein Mevan_0378 (101 aa).

This sequence belongs to the UPF0235 family.

The sequence is that of UPF0235 protein Mevan_0378 from Methanococcus vannielii (strain ATCC 35089 / DSM 1224 / JCM 13029 / OCM 148 / SB).